The sequence spans 489 residues: N-succinylglutamate 5-semialdehyde dehydrogenase (489 aa).

221–226 (GSSGTG) contributes to the NAD(+) binding site. Residues Glu-244 and Cys-278 contribute to the active site.

The protein belongs to the aldehyde dehydrogenase family. AstD subfamily.

It catalyses the reaction N-succinyl-L-glutamate 5-semialdehyde + NAD(+) + H2O = N-succinyl-L-glutamate + NADH + 2 H(+). The protein operates within amino-acid degradation; L-arginine degradation via AST pathway; L-glutamate and succinate from L-arginine: step 4/5. Its function is as follows. Catalyzes the NAD-dependent reduction of succinylglutamate semialdehyde into succinylglutamate. The chain is N-succinylglutamate 5-semialdehyde dehydrogenase from Sorangium cellulosum (strain So ce56) (Polyangium cellulosum (strain So ce56)).